The primary structure comprises 261 residues: RNA-binding protein 1 (261 aa).

Disordered stretches follow at residues 1–38 (MADGYWNRQQSLLPHSGLHKRPRPDYEMPASGLPSGNE) and 232–261 (QFSRYPGPRSGGGPRSSGPPRGGHGSRGRR). Residues 151–236 (PTLYIEGLPS…SHLRLQFSRY (86 aa)) enclose the RRM domain. A compositionally biased stretch (gly residues) spans 240–254 (RSGGGPRSSGPPRGG).

Ubiquitous.

It is found in the nucleus speckle. The protein localises to the cytoplasmic granule. Functionally, RNA-binding protein interacting with the enod40 RNA. The polypeptide is RNA-binding protein 1 (Medicago truncatula (Barrel medic)).